The sequence spans 440 residues: Chromosome partition protein MukF (440 aa).

The interval 208–236 is leucine-zipper; the sequence is LSETSGTLRELQDTLEAAGDKLQANLLRI.

Belongs to the MukF family. Interacts, and probably forms a ternary complex, with MukE and MukB via its C-terminal region. The complex formation is stimulated by calcium or magnesium. It is required for an interaction between MukE and MukB.

It localises to the cytoplasm. It is found in the nucleoid. Involved in chromosome condensation, segregation and cell cycle progression. May participate in facilitating chromosome segregation by condensation DNA from both sides of a centrally located replisome during cell division. Not required for mini-F plasmid partitioning. Probably acts via its interaction with MukB and MukE. Overexpression results in anucleate cells. It has a calcium binding activity. The chain is Chromosome partition protein MukF from Edwardsiella ictaluri (strain 93-146).